A 246-amino-acid chain; its full sequence is Dof zinc finger protein DOF4.7 (246 aa).

Polar residues-rich tracts occupy residues M1–G12 and Q27–T37. The tract at residues M1–P39 is disordered. The segment at L41–K95 adopts a Dof-type zinc-finger fold. Zn(2+)-binding residues include C43, C46, C68, and C71. The tract at residues G216–N235 is disordered.

As to quaternary structure, interacts with ZFP2. Highly expressed at the base of all organs of the flower, especially in the abscission zone (AZ) of petals, stamens and sepals. Expressed at low levels in sepals, filaments, stigmatic papillae, tips of young siliques, and at the base of pedicels and leaf trichomes.

It localises to the nucleus. Functionally, transcription factor that binds specifically to a 5'-AA[AG]G-3' consensus core sequence. Involved in the negative regulation of floral organ abscission by binding to the typical DOF 5'-AAAG-3' sequences in the promoter of ADPG2/PGAZAT, and by down-regulating its expression. ADPG2/PGAZAT is an abscission-related and cell wall hydrolyzing polygalacturonase. May act through the interaction with ZFP2, an abscission-related transcription factor. This Arabidopsis thaliana (Mouse-ear cress) protein is Dof zinc finger protein DOF4.7.